A 400-amino-acid polypeptide reads, in one-letter code: MKAVRVHILGSGGREHAIGWAFAKQGYEVHFYPGNAGTKRDGTNHPYEGEKTLKAIPEEDIVIPGSEEFLVEGVSNWRSNVFGPVKEVARLEGSKVYAKRFMKKYGIRTARFEVAETPEELREKIKKFSPPYVIKADGLARGKGVLILDSKEETIEKGSKLIIGELIKGVKGPVVIDEFLAGNELSAMAVVNGRNFVILPFVRDYKRLMDGDRGPNTGGMGSWGPVEIPSDTIKKIEELFDKTLWGVEKEGYAYRGFLYLGLMLHDGDPYILEYNVRLGDPETEVIVTLNPEGFVNAVLEGYRGGKMEPVEPRGFAVDVVLAARGYPDAPEKGKEITLPEEGLIFFAGVAEKDGKLVTNGGRVLHCMGTGETKEEARRKAYELAEKVHFEGKTYRRDIAL.

One can recognise an ATP-grasp domain in the interval 99-303 (KRFMKKYGIR…FVNAVLEGYR (205 aa)). Residue 125 to 186 (IKKFSPPYVI…DEFLAGNELS (62 aa)) coordinates ATP. The Mg(2+) site is built by E273 and N275.

It belongs to the GARS family. Mg(2+) serves as cofactor. Mn(2+) is required as a cofactor.

The catalysed reaction is 5-phospho-beta-D-ribosylamine + glycine + ATP = N(1)-(5-phospho-beta-D-ribosyl)glycinamide + ADP + phosphate + H(+). Its pathway is purine metabolism; IMP biosynthesis via de novo pathway; N(1)-(5-phospho-D-ribosyl)glycinamide from 5-phospho-alpha-D-ribose 1-diphosphate: step 2/2. The chain is Phosphoribosylamine--glycine ligase from Thermotoga maritima (strain ATCC 43589 / DSM 3109 / JCM 10099 / NBRC 100826 / MSB8).